A 231-amino-acid chain; its full sequence is Endonuclease NucS (231 aa).

Belongs to the NucS endonuclease family.

The protein resides in the cytoplasm. Cleaves both 3' and 5' ssDNA extremities of branched DNA structures. This chain is Endonuclease NucS, found in Beutenbergia cavernae (strain ATCC BAA-8 / DSM 12333 / CCUG 43141 / JCM 11478 / NBRC 16432 / NCIMB 13614 / HKI 0122).